The primary structure comprises 299 residues: Probable alpha-L-glutamate ligase (299 aa).

Residues L112–E294 enclose the ATP-grasp domain. ATP-binding positions include K148, D185–F186, D194, and R218–N220. Residues D255, E267, and N269 each contribute to the Mg(2+) site. Mn(2+) contacts are provided by D255, E267, and N269.

This sequence belongs to the RimK family. Mg(2+) serves as cofactor. Requires Mn(2+) as cofactor.

The chain is Probable alpha-L-glutamate ligase from Histophilus somni (strain 2336) (Haemophilus somnus).